Consider the following 214-residue polypeptide: CASP-like protein 0U1 (214 aa).

Residues 1 to 82 (MATSEAPLLK…GFTSFYQFKG (82 aa)) are Cytoplasmic-facing. A helical membrane pass occupies residues 83-103 (VVGVYAAFWVYTVLLIGLYLF). Topologically, residues 104-112 (SRGPPPGTE) are extracellular. A helical membrane pass occupies residues 113–133 (FVVHALFTLCMIAFVSLSVIS). The Cytoplasmic portion of the chain corresponds to 134-153 (CTSTVIESDYSVCKNAAYAK). Residues 154 to 174 (ASLVFAALVVVLNCATCAFVF) traverse the membrane as a helical segment. Residues 175 to 214 (KQWRSLQFVGMPENFRPFGRHRHKHGHHAGDADDAIPTHP) are Extracellular-facing. The disordered stretch occupies residues 194–214 (RHRHKHGHHAGDADDAIPTHP).

Belongs to the Casparian strip membrane proteins (CASP) family. In terms of assembly, homodimer and heterodimers.

The protein localises to the cell membrane. The protein is CASP-like protein 0U1 of Ostreococcus tauri.